The chain runs to 418 residues: Tyrosine--tRNA ligase (418 aa).

Residue tyrosine 34 participates in L-tyrosine binding. The short motif at proline 39 to histidine 48 is the 'HIGH' region element. Positions 169 and 173 each coordinate L-tyrosine. The 'KMSKS' region motif lies at lysine 229–serine 233. Residue lysine 232 coordinates ATP. In terms of domain architecture, S4 RNA-binding spans leucine 352–tyrosine 418.

This sequence belongs to the class-I aminoacyl-tRNA synthetase family. TyrS type 1 subfamily. As to quaternary structure, homodimer.

The protein resides in the cytoplasm. It carries out the reaction tRNA(Tyr) + L-tyrosine + ATP = L-tyrosyl-tRNA(Tyr) + AMP + diphosphate + H(+). In terms of biological role, catalyzes the attachment of tyrosine to tRNA(Tyr) in a two-step reaction: tyrosine is first activated by ATP to form Tyr-AMP and then transferred to the acceptor end of tRNA(Tyr). The protein is Tyrosine--tRNA ligase of Streptococcus equi subsp. equi (strain 4047).